Here is a 316-residue protein sequence, read N- to C-terminus: ATP synthase gamma chain (316 aa).

It belongs to the ATPase gamma chain family. As to quaternary structure, F-type ATPases have 2 components, CF(1) - the catalytic core - and CF(0) - the membrane proton channel. CF(1) has five subunits: alpha(3), beta(3), gamma(1), delta(1), epsilon(1). CF(0) has three main subunits: a, b and c.

It is found in the cellular thylakoid membrane. Its function is as follows. Produces ATP from ADP in the presence of a proton gradient across the membrane. The gamma chain is believed to be important in regulating ATPase activity and the flow of protons through the CF(0) complex. This chain is ATP synthase gamma chain, found in Synechococcus elongatus (strain ATCC 33912 / PCC 7942 / FACHB-805) (Anacystis nidulans R2).